The chain runs to 113 residues: Protein suex-1 (113 aa).

Positions 1–22 are cleaved as a signal peptide; the sequence is MQSLLVFCLATIILSNFTEASA.

The sequence is that of Protein suex-1 from Caenorhabditis elegans.